The sequence spans 130 residues: uncharacterized protein (130 aa).

This is an uncharacterized protein from Treponema pallidum (strain Nichols).